The following is a 551-amino-acid chain: GMP synthase [glutamine-hydrolyzing] (551 aa).

A disordered region spans residues 1–28 (MTSSPTAAARTEGEAAPTVPTQVESGTA). Residues 19–28 (VPTQVESGTA) show a composition bias toward polar residues. The region spanning 37–227 (MVAILDFGSQ…VYHICGCEPE (191 aa)) is the Glutamine amidotransferase type-1 domain. Residue Cys-114 is the Nucleophile of the active site. Active-site residues include His-201 and Glu-203. The 199-residue stretch at 228-426 (WTTAAFIEEA…LGLPEEIVQR (199 aa)) folds into the GMPS ATP-PPase domain. 255–261 (SGGVDSS) is an ATP binding site.

In terms of assembly, homodimer.

It carries out the reaction XMP + L-glutamine + ATP + H2O = GMP + L-glutamate + AMP + diphosphate + 2 H(+). Its pathway is purine metabolism; GMP biosynthesis; GMP from XMP (L-Gln route): step 1/1. In terms of biological role, catalyzes the synthesis of GMP from XMP. The protein is GMP synthase [glutamine-hydrolyzing] of Gloeobacter violaceus (strain ATCC 29082 / PCC 7421).